A 412-amino-acid polypeptide reads, in one-letter code: MNITSPLSAPSHQYPDALGRFGNYGGKYVPETLMPALTELEEAYYRYRAESSFQEELAGLLKDYVGRSSPLYFAERLSAHYARPDGTYPLIYLKREDLNHTGAHKINNALGQVLLAKRMGKKRIIAETGAGQHGVATATVCARFGLECIIYMGVQDMERQKLNVFRMNLLGARVQPVTAGTGTLKDATSEAIRDWVTNVETTHYILGSVAGPHPYPMMVRDFHRVIGQETRQQALKKWGGLPDILLACVGGGSNAMGLFYDFIDEPAVRLIGIEAAGESIVSGKHAATLTMGKPGVLHGAMSYLLQDKEGQVTEAHSISAGLDYPGVGPEHSYLKDAGRAEYYSVTDQEAITALQRLSQLEGIIPALETAHAFAYLETLCPQLKNGERIVINCSGRGDKDVQTVAKYLQMEI.

Lys-105 carries the N6-(pyridoxal phosphate)lysine modification.

The protein belongs to the TrpB family. Tetramer of two alpha and two beta chains. Requires pyridoxal 5'-phosphate as cofactor.

It carries out the reaction (1S,2R)-1-C-(indol-3-yl)glycerol 3-phosphate + L-serine = D-glyceraldehyde 3-phosphate + L-tryptophan + H2O. It participates in amino-acid biosynthesis; L-tryptophan biosynthesis; L-tryptophan from chorismate: step 5/5. The beta subunit is responsible for the synthesis of L-tryptophan from indole and L-serine. This chain is Tryptophan synthase beta chain (trpB), found in Synechocystis sp. (strain ATCC 27184 / PCC 6803 / Kazusa).